The primary structure comprises 1712 residues: Latent-transforming growth factor beta-binding protein 1 (1712 aa).

The signal sequence occupies residues 1 to 20 (MAGAWLRWGLLLWAGLLAWS). The interval 63-148 (SSTATSSRSL…QDTQSSGGSR (86 aa)) is disordered. Polar residues predominate over residues 136–147 (KVQQDTQSSGGS). The EGF-like 1 domain occupies 181 to 213 (TKPSCVPPCQNGGMCLRPQFCVCKPGTKGKACE). 3 disulfide bridges follow: cysteine 185-cysteine 195, cysteine 189-cysteine 201, and cysteine 203-cysteine 212. N-linked (GlcNAc...) asparagine glycosylation is found at asparagine 339 and asparagine 370. Positions 391 to 423 (RVVICHLPCMNGGQCSSRDKCQCPPNFTGKLCQ) constitute an EGF-like 2 domain. 6 disulfides stabilise this stretch: cysteine 395–cysteine 405, cysteine 399–cysteine 411, cysteine 413–cysteine 422, cysteine 551–cysteine 573, cysteine 560–cysteine 586, and cysteine 574–cysteine 589. A glycan (N-linked (GlcNAc...) asparagine) is linked at asparagine 416. Positions 549–601 (GRCFQETIGSQCGKALPGLSKQEDCCGTVGTSWGFNKCQKCPKKQSYHGYTQM) constitute a TB 1 domain. Asparagine 612 carries N-linked (GlcNAc...) asparagine glycosylation. The region spanning 618–658 (DINECQLQGVCPNGECLNTMGSYRCSCKMGFGPDPTFSSCV) is the EGF-like 3; calcium-binding domain. 7 disulfides stabilise this stretch: cysteine 622/cysteine 633, cysteine 628/cysteine 642, cysteine 644/cysteine 657, cysteine 671/cysteine 694, cysteine 681/cysteine 706, cysteine 695/cysteine 709, and cysteine 696/cysteine 721. Serine 639 is a glycosylation site (O-linked (Glc) serine). A TB 2 domain is found at 669 to 721 (GPCYRLVSPGRQCMHPLSVHLTKQICCCSVGKAWGPQCEKCPLPGTAAFKEIC). The interval 752–803 (KNTQPVAKSTHPPPLPAKEEPVEALTSSREHGPGVAEPEVVTAPPEKEIPSL) is disordered. Residues threonine 761 and threonine 793 are each glycosylated (O-linked (GalNAc...) threonine). The region spanning 865-906 (EINECTVNPDICGAGHCINLPVRYTCICYEGYKFSEQQRKCI) is the EGF-like 4; calcium-binding domain. 37 disulfide bridges follow: cysteine 869-cysteine 881, cysteine 876-cysteine 890, cysteine 892-cysteine 905, cysteine 911-cysteine 923, cysteine 918-cysteine 932, cysteine 934-cysteine 947, cysteine 953-cysteine 964, cysteine 959-cysteine 973, cysteine 976-cysteine 988, cysteine 994-cysteine 1005, cysteine 1000-cysteine 1014, cysteine 1017-cysteine 1028, cysteine 1034-cysteine 1045, cysteine 1040-cysteine 1054, cysteine 1056-cysteine 1069, cysteine 1075-cysteine 1086, cysteine 1081-cysteine 1095, cysteine 1097-cysteine 1110, cysteine 1116-cysteine 1127, cysteine 1122-cysteine 1136, cysteine 1138-cysteine 1151, cysteine 1157-cysteine 1169, cysteine 1164-cysteine 1178, cysteine 1180-cysteine 1192, cysteine 1198-cysteine 1210, cysteine 1204-cysteine 1219, cysteine 1221-cysteine 1234, cysteine 1240-cysteine 1252, cysteine 1246-cysteine 1261, cysteine 1263-cysteine 1276, cysteine 1282-cysteine 1294, cysteine 1289-cysteine 1303, cysteine 1305-cysteine 1319, cysteine 1340-cysteine 1363, cysteine 1350-cysteine 1375, cysteine 1364-cysteine 1380, and cysteine 1365-cysteine 1392. In terms of domain architecture, EGF-like 5; calcium-binding spans 907 to 948 (DIDECAQAQHLCSQGRCENTEGSFLCICPAGFIASEEGSNCI). O-linked (Glc) serine glycosylation is present at serine 929. An EGF-like 6; calcium-binding domain is found at 949 to 989 (DVDECLRPDVCRDGRCINTAGAFRCEYCDSGYRMSRRGHCE). At asparagine 966 the chain carries (3R)-3-hydroxyasparagine. Residues 990–1029 (DIDECLTPSTCPEEQCVNSPGSYQCVPCTEGFRGWNGQCL) enclose the EGF-like 7; calcium-binding domain. O-linked (Glc) serine glycosylation is present at serine 1011. Positions 1030–1070 (DVDECLQPKVCTNGSCTNLEGSYMCSCHKGYSPTPDHRHCQ) constitute an EGF-like 8; calcium-binding domain. Asparagine 1042 is a glycosylation site (N-linked (GlcNAc...) asparagine). O-linked (Glc) serine glycosylation is present at serine 1051. In terms of domain architecture, EGF-like 9; calcium-binding spans 1071 to 1111 (DIDECQQGNLCMNGQCKNTDGSFRCTCGQGYQLSAAKDQCE). Residues 1112-1152 (DIDECEHRHLCSHGQCRNTEGSFQCLCNQGYRASVLGDHCE) enclose the EGF-like 10; calcium-binding domain. Asparagine 1129 carries the (3R)-3-hydroxyasparagine modification. Residue serine 1133 is glycosylated (O-linked (Glc) serine). Residues 1153–1193 (DINECLEDSSVCQGGDCINTAGSYDCTCPDGLQLNDNKGCQ) form the EGF-like 11; calcium-binding domain. One can recognise an EGF-like 12; calcium-binding domain in the interval 1194 to 1235 (DINECAQPGLCAPHGECLNTQGSFHCVCEQGFSISADGRTCE). Serine 1216 carries O-linked (Glc) serine glycosylation. The EGF-like 13; calcium-binding domain occupies 1236 to 1277 (DIDECVNNTVCDSHGFCDNTAGSFRCLCYQGFQAPQDGQGCV). N-linked (GlcNAc...) asparagine glycosylation occurs at asparagine 1242. The EGF-like 14; calcium-binding domain maps to 1278–1320 (DVNECELLSGVCGEAFCENVEGSFLCVCADENQEYSPMTGQCR). An 8-Cys3 region region spans residues 1335 to 1402 (EEKKECYYNL…PRGKGFVPAG (68 aa)). In terms of domain architecture, TB 3 spans 1338–1392 (KECYYNLNDASLCDNVLAPNVTKQECCCTSGAGWGDNCEIFPCPVQGTAEFSEMC). A glycan (N-linked (GlcNAc...) asparagine) is linked at asparagine 1357. Serine 1405 carries the post-translational modification Phosphoserine. Residues 1415 to 1457 (DADECLLFGEEICKNGYCLNTQPGYECYCKEGTYYDPVKLQCF) enclose the EGF-like 15; calcium-binding domain. Disulfide bonds link cysteine 1419–cysteine 1432, cysteine 1427–cysteine 1441, cysteine 1443–cysteine 1456, cysteine 1462–cysteine 1473, cysteine 1468–cysteine 1482, cysteine 1484–cysteine 1497, cysteine 1517–cysteine 1541, cysteine 1527–cysteine 1553, cysteine 1542–cysteine 1556, and cysteine 1543–cysteine 1568. Residues 1458–1498 (DMDECQDPNSCIDGQCVNTEGSYNCFCTHPMVLDASEKRCV) enclose the EGF-like 16; calcium-binding domain. Serine 1479 carries O-linked (Glc) serine glycosylation. Residues 1498–1712 (VQPTESNEQI…LNLDKDSDLE (215 aa)) form a C-terminal domain region. The 54-residue stretch at 1515–1568 (DLCWEHLSEEYVCSRPLVGKQTTYTECCCLYGEAWGMQCALCPMKDSDDYAQLC) folds into the TB 4 domain. Serine 1588 and serine 1607 each carry phosphoserine. An EGF-like 17 domain is found at 1612 to 1652 (QAEECGILNGCENGRCVRVQEGYTCDCFDGYHLDMAKMTCV). 6 disulfide bridges follow: cysteine 1616–cysteine 1627, cysteine 1622–cysteine 1636, cysteine 1638–cysteine 1651, cysteine 1657–cysteine 1672, cysteine 1667–cysteine 1681, and cysteine 1683–cysteine 1696. Positions 1653–1697 (DVNECSELNNRMSLCKNAKCINTEGSYKCVCLPGYVPSDKPNYCT) constitute an EGF-like 18; calcium-binding domain. O-linked (Glc) serine glycosylation is present at serine 1678.

It belongs to the LTBP family. Interacts with TGFB1; associates via disulfide bonds with the Latency-associated peptide chain (LAP) regulatory chain of TGFB1, leading to regulate activation of TGF-beta-1. LTBP1 does not bind directly to TGF-beta-1, the active chain of TGFB1. Interacts (via C-terminal domain) with FBN1 (via N-terminal domain). Interacts with FBN2. Interacts with ADAMTSL2. Interacts with EFEMP2. Contains hydroxylated asparagine residues. Post-translationally, two intrachain disulfide bonds from the TB3 domain are rearranged upon TGFB1 binding, and form interchain bonds with TGFB1 propeptide, anchoring it to the extracellular matrix. In terms of processing, O-glycosylated on serine residues by POGLUT2 and POGLUT3.

The protein resides in the secreted. It localises to the extracellular space. It is found in the extracellular matrix. Key regulator of transforming growth factor beta (TGFB1, TGFB2 and TGFB3) that controls TGF-beta activation by maintaining it in a latent state during storage in extracellular space. Associates specifically via disulfide bonds with the Latency-associated peptide (LAP), which is the regulatory chain of TGF-beta, and regulates integrin-dependent activation of TGF-beta. Outcompeted by LRRC32/GARP for binding to LAP regulatory chain of TGF-beta. In Rattus norvegicus (Rat), this protein is Latent-transforming growth factor beta-binding protein 1 (Ltbp1).